A 437-amino-acid chain; its full sequence is Replication factor C large subunit (437 aa).

48–55 (GPPGVGKT) serves as a coordination point for ATP. Residues 410-437 (TQASKPTSEEKAEKSKKYYPKRSSSRKT) form a disordered region. The span at 416 to 425 (TSEEKAEKSK) shows a compositional bias: basic and acidic residues. Over residues 426–437 (KYYPKRSSSRKT) the composition is skewed to basic residues.

The protein belongs to the activator 1 small subunits family. RfcL subfamily. As to quaternary structure, heteromultimer composed of small subunits (RfcS) and large subunits (RfcL).

Part of the RFC clamp loader complex which loads the PCNA sliding clamp onto DNA. In Sulfolobus acidocaldarius (strain ATCC 33909 / DSM 639 / JCM 8929 / NBRC 15157 / NCIMB 11770), this protein is Replication factor C large subunit.